Reading from the N-terminus, the 602-residue chain is MFKRPSFLRRQRHTVGRDDWSAFPVRQLFVLALCRICEPIAFMSIFPYVYHMVEAFKVTDDDHKIALYAGLITSSFTFAEFSAGMFWGRMSDKIGRKPVLIMGLIGTAISMIVFGFAPNLPTAMVARALGGLLNGNIGVLQTTVAEIVTVKEHQPRAYSIMPFVWCLGSIIGPAMGGALAQPCQNYPGLFQRHTIFDSFPFLLPNLVCVVVLVFGVIVGFLFLEETHPEKRYRRDPGLELGNWLIARCSGSRVQLTEDDTDIKVDANEADYFNYGDVPPPEYRSTETSPQLAPIKNVGALSGDDDIEGQVKGEQCGTPKAFTKQVIFNIVAYGILAYHSVSFDQLIPVFLSTPKSDDNFVLPFKFTGGLGLPTKTIGFMLAVQGVYSMIAQLWLFPFVVRHFGTLRTFRLVLLVWPPLYMLVPYLVLLPSILQTAAVYLALISKITLHVIAFPSTAILLANAAPSSKVLGSINGAAASTASLSRALGPTITGLLHSKGLESGYSIIAWWACGLVCVTGTIQSFWMEESEPRRDSEKAGNSDSTAGIPMRSSFPAGKEYATPEEERRLLSSTRTSVDDLDISNLDLTQIEPAPRSNPLAFAED.

The next 12 helical transmembrane spans lie at 29–49, 67–87, 98–118, 128–148, 160–180, 201–221, 329–349, 378–398, 411–431, 439–459, 468–486, and 505–525; these read FVLALCRICEPIAFMSIFPYV, LYAGLITSSFTFAEFSAGMFW, PVLIMGLIGTAISMIVFGFAP, ALGGLLNGNIGVLQTTVAEIV, IMPFVWCLGSIIGPAMGGALA, FLLPNLVCVVVLVFGVIVGFL, IVAYGILAYHSVSFDQLIPVF, FMLAVQGVYSMIAQLWLFPFV, VLLVWPPLYMLVPYLVLLPSI, LALISKITLHVIAFPSTAILL, VLGSINGAAASTASLSRAL, and IIAWWACGLVCVTGTIQSFWM. The interval 527-602 is disordered; it reads ESEPRRDSEK…RSNPLAFAED (76 aa). Positions 528 to 538 are enriched in basic and acidic residues; sequence SEPRRDSEKAG.

The protein belongs to the major facilitator superfamily.

The protein localises to the membrane. Major facilitator superfamily transporter that may be involved in A.fumigatus adaptation to azoles such as vorizonazole. In Aspergillus fumigatus (strain ATCC MYA-4609 / CBS 101355 / FGSC A1100 / Af293) (Neosartorya fumigata), this protein is Major facilitator superfamily multidrug transporter mfsB.